The sequence spans 434 residues: Eukaryotic translation initiation factor 3 subunit E (434 aa).

Residues 219–392 (FFNHPKGRDL…GHVVMGTQPL (174 aa)) form the PCI domain.

The protein belongs to the eIF-3 subunit E family. Component of the eukaryotic translation initiation factor 3 (eIF-3) complex. The eIF-3 complex interacts with pix. Interacts with mxt.

The protein resides in the cytoplasm. In terms of biological role, component of the eukaryotic translation initiation factor 3 (eIF-3) complex, which is involved in protein synthesis of a specialized repertoire of mRNAs and, together with other initiation factors, stimulates binding of mRNA and methionyl-tRNAi to the 40S ribosome. The eIF-3 complex specifically targets and initiates translation of a subset of mRNAs involved in cell proliferation. This Drosophila persimilis (Fruit fly) protein is Eukaryotic translation initiation factor 3 subunit E (eIF3-S6).